A 260-amino-acid chain; its full sequence is Late transcription factor 1 (260 aa).

Belongs to the chordopoxvirinae VLTF-1 family. As to quaternary structure, interacts with the late transcription factors VLTF-2 and VLTF-3. Interacts with the late transcription elongation factor VLTF-4. Interacts with itself.

Associates with RNA polymerase to initiate transcription from late gene promoters. The polypeptide is Late transcription factor 1 (OPG093) (Homo sapiens (Human)).